The following is a 415-amino-acid chain: Type II methyltransferase M.DdeI (415 aa).

Positions 1–373 constitute an SAM-dependent MTase C5-type domain; the sequence is MNIIDLFAGC…ERISWYFENI (373 aa). C76 is a catalytic residue.

Belongs to the class I-like SAM-binding methyltransferase superfamily. C5-methyltransferase family.

The catalysed reaction is a 2'-deoxycytidine in DNA + S-adenosyl-L-methionine = a 5-methyl-2'-deoxycytidine in DNA + S-adenosyl-L-homocysteine + H(+). In terms of biological role, a methylase that recognizes the double-stranded sequence 5'-CTNAG-3', methylates C-1 on both strands, and protects the DNA from cleavage by the DdeI endonuclease. This is Type II methyltransferase M.DdeI (ddeIM) from Desulfomicrobium norvegicum (strain DSM 1741 / NCIMB 8310) (Desulfovibrio baculatus (strain Norway 4)).